Reading from the N-terminus, the 251-residue chain is 5'-nucleotidase SurE (251 aa).

The a divalent metal cation site is built by D8, D9, S39, and N91.

This sequence belongs to the SurE nucleotidase family. Requires a divalent metal cation as cofactor.

The protein localises to the cytoplasm. It catalyses the reaction a ribonucleoside 5'-phosphate + H2O = a ribonucleoside + phosphate. Nucleotidase that shows phosphatase activity on nucleoside 5'-monophosphates. The chain is 5'-nucleotidase SurE from Methylococcus capsulatus (strain ATCC 33009 / NCIMB 11132 / Bath).